A 542-amino-acid chain; its full sequence is Chaperonin GroEL (542 aa).

ATP is bound by residues 29–32 (TLGP), 86–90 (DGTTT), G413, and D492.

This sequence belongs to the chaperonin (HSP60) family. Forms a cylinder of 14 subunits composed of two heptameric rings stacked back-to-back. Interacts with the co-chaperonin GroES.

It localises to the cytoplasm. The catalysed reaction is ATP + H2O + a folded polypeptide = ADP + phosphate + an unfolded polypeptide.. In terms of biological role, together with its co-chaperonin GroES, plays an essential role in assisting protein folding. The GroEL-GroES system forms a nano-cage that allows encapsulation of the non-native substrate proteins and provides a physical environment optimized to promote and accelerate protein folding. The polypeptide is Chaperonin GroEL (Nocardia asteroides).